Reading from the N-terminus, the 163-residue chain is Lipoprotein signal peptidase (163 aa).

A run of 3 helical transmembrane segments spans residues serine 4–leucine 24, leucine 66–tryptophan 86, and aspartate 92–isoleucine 112. Active-site residues include aspartate 122 and aspartate 140. A helical transmembrane segment spans residues serine 132–leucine 152.

This sequence belongs to the peptidase A8 family.

The protein resides in the cell inner membrane. The enzyme catalyses Release of signal peptides from bacterial membrane prolipoproteins. Hydrolyzes -Xaa-Yaa-Zaa-|-(S,diacylglyceryl)Cys-, in which Xaa is hydrophobic (preferably Leu), and Yaa (Ala or Ser) and Zaa (Gly or Ala) have small, neutral side chains.. The protein operates within protein modification; lipoprotein biosynthesis (signal peptide cleavage). In terms of biological role, this protein specifically catalyzes the removal of signal peptides from prolipoproteins. This chain is Lipoprotein signal peptidase, found in Allorhizobium ampelinum (strain ATCC BAA-846 / DSM 112012 / S4) (Agrobacterium vitis (strain S4)).